Consider the following 307-residue polypeptide: UDP-N-acetylenolpyruvoylglucosamine reductase (307 aa).

The 165-residue stretch at Thr33 to Gly197 folds into the FAD-binding PCMH-type domain. The active site involves Arg176. Ser226 acts as the Proton donor in catalysis. Glu296 is a catalytic residue.

This sequence belongs to the MurB family. FAD is required as a cofactor.

It is found in the cytoplasm. The enzyme catalyses UDP-N-acetyl-alpha-D-muramate + NADP(+) = UDP-N-acetyl-3-O-(1-carboxyvinyl)-alpha-D-glucosamine + NADPH + H(+). It functions in the pathway cell wall biogenesis; peptidoglycan biosynthesis. Functionally, cell wall formation. The sequence is that of UDP-N-acetylenolpyruvoylglucosamine reductase from Staphylococcus aureus (strain Mu3 / ATCC 700698).